The chain runs to 319 residues: MEKEADNKFRWVIKNFSSLGSERVFSDIFVVGSCKWRLMAYPKGVRDNRCFSLFLVVTDFKTLPCDWKRHTRLRLNVVNQLSEELSILKETQMWFDQKTPAWGFLAMLPLTELKAENGGFLVNEEVKIVVEVDVVEALGKLEESEEATQPLKKVKLEAFVESKGLLKETSSVKEEIIDVNVFHVLPSQVEFVSRVFERYPEIASIFQAKKQHLRTACMYVLLSLIETLCKSLEELSNDDLVGGDNALQYLKFSGFKVDWLEKKLEEVKEKKKEEQIGETRMQEMKVFKQKCSDIEALMEREKSKLLVTRGSPLTLDDVL.

The MATH domain maps to 6–132 (DNKFRWVIKN…NEEVKIVVEV (127 aa)). Positions 255–302 (FKVDWLEKKLEEVKEKKKEEQIGETRMQEMKVFKQKCSDIEALMEREK) form a coiled coil.

In Arabidopsis thaliana (Mouse-ear cress), this protein is MATH domain and coiled-coil domain-containing protein At3g58200.